An 864-amino-acid polypeptide reads, in one-letter code: A-kinase anchor protein 3 (864 aa).

At Ser-12 the chain carries Phosphoserine; by STK33. Residues 125–138 form a PKA-RII subunit binding domain region; sequence VSFYANRLTNLVIA. Disordered stretches follow at residues 190 to 235 and 251 to 281; these read NISS…DKPG and AGDAKEGGRSLPGDQKLFRTSPDNRPDDFSN. The span at 204 to 218 shows a compositional bias: polar residues; sequence SGSSQAPGLRYTSTL. Ser-206 carries the phosphoserine modification. Residues 219 to 235 show a composition bias toward basic and acidic residues; sequence KIKESTKEGKCPDDKPG. Ser-405 carries the phosphoserine modification. Position 406 is a phosphotyrosine (Tyr-406). A disordered region spans residues 619 to 638; the sequence is VHEQNTQEEEIHPCERPKTP. Positions 627 to 638 are enriched in basic and acidic residues; it reads EEIHPCERPKTP.

It belongs to the AKAP110 family. As to quaternary structure, interacts with ROPN1 and ROPN1L. Interacts with QRICH2. In terms of processing, phosphorylated by STK33 during sperm flagella assembly. Phosphorylated on tyrosine.

It localises to the cytoplasmic vesicle. The protein localises to the secretory vesicle. Its subcellular location is the acrosome. It is found in the cell projection. The protein resides in the cilium. It localises to the flagellum. Its function is as follows. Structural component of sperm fibrous sheath. Required for the formation of the subcellular structure of the sperm flagellum, sperm motility and male fertility. The protein is A-kinase anchor protein 3 of Mus musculus (Mouse).